The primary structure comprises 118 residues: Large ribosomal subunit protein uL18 (118 aa).

The protein belongs to the universal ribosomal protein uL18 family. As to quaternary structure, part of the 50S ribosomal subunit; part of the 5S rRNA/L5/L18/L25 subcomplex. Contacts the 5S and 23S rRNAs.

This is one of the proteins that bind and probably mediate the attachment of the 5S RNA into the large ribosomal subunit, where it forms part of the central protuberance. The protein is Large ribosomal subunit protein uL18 of Rickettsia canadensis (strain McKiel).